The following is a 427-amino-acid chain: Putative B3 domain-containing protein Os04g0346900 (427 aa).

2 DNA-binding regions (TF-B3) span residues 25-118 and 140-236; these read LVPS…FDTT and KPQF…FGPN. A disordered region spans residues 253–309; the sequence is TGEQQEAPSFSRRKCNNKKKSRFGEDDGNQQEMPCSRKGSGNKGRTSDRETKRMRKT. Over residues 263–273 the composition is skewed to basic residues; that stretch reads SRRKCNNKKKS. Residues 320 to 427 constitute a DNA-binding region (TF-B3 3); it reads WIKKEINEYV…TLWRVDIERC (108 aa).

It is found in the nucleus. The chain is Putative B3 domain-containing protein Os04g0346900 from Oryza sativa subsp. japonica (Rice).